A 1152-amino-acid polypeptide reads, in one-letter code: P3N-PIPO polyprotein (1152 aa).

Positions 292–437 (VMNQQTLTAL…HTLTHRMVQY (146 aa)) constitute a Peptidase S30 domain. Catalysis depends on for P1 proteinase activity residues H345, D354, and S388. The short motif at 489-492 (KITC) is the Involved in interaction with stylet and aphid transmission element. The Involved in virions binding and aphid transmission motif lies at 747-749 (PTK). The Peptidase C6 domain maps to 773-895 (MFVAKDGYCY…ESEMQHYRVG (123 aa)). Catalysis depends on for helper component proteinase activity residues C781 and H854.

This sequence belongs to the potyviridae P3N-PIPO polyprotein family. Interacts (via PIPO domain) with host PCaP1 protein; this interaction may help to anchor the movement complex to the plasma membrane from which the complex could move to the plasmodesmata. Potyviral RNA is expressed as two polyproteins which undergo post-translational proteolytic processing. Genome polyprotein is processed by NIa-pro, P1 and HC-pro proteinases resulting in the production of at least ten individual proteins. P3N-PIPO is cleaved by P1 and HC-pro proteinases resulting in the production of three individual proteins. The P1 proteinase and the HC-pro cleave only their respective C-termini autocatalytically.

Its subcellular location is the host cell junction. The protein localises to the host plasmodesma. It catalyses the reaction Hydrolyzes a Gly-|-Gly bond at its own C-terminus, commonly in the sequence -Tyr-Xaa-Val-Gly-|-Gly, in the processing of the potyviral polyprotein.. Required for aphid transmission and also has proteolytic activity. Only cleaves a Gly-Gly dipeptide at its own C-terminus. Interacts with virions and aphid stylets. Acts as a suppressor of RNA-mediated gene silencing, also known as post-transcriptional gene silencing (PTGS), a mechanism of plant viral defense that limits the accumulation of viral RNAs. May have RNA-binding activity. Functionally, allows efficient cell to cell propagation, by bypassing the host cell wall barrier. Transports viral genome to neighboring plant cells directly through plasmosdesmata, without any budding. The polypeptide is P3N-PIPO polyprotein (Carthamus tinctorius (Safflower)).